The primary structure comprises 218 residues: Ras-related protein Rab-4A (218 aa).

GTP is bound by residues Gly23, Thr24, Gly25, Lys26, Ser27, Cys28, Ser42, His44, and Thr45. Ser27 is a Mg(2+) binding site. The Switch 1 signature appears at 44-49; sequence HTIGVE. Thr45 and Asp68 together coordinate Mg(2+). The Switch 2 motif lies at 70–79; that stretch reads AGQERFRSVT. Gly71 contacts GTP. Residue Gln72 is modified to 5-glutamyl serotonin. Residues Asn126, Lys127, Asp129, Ala157, and Leu158 each contribute to the GTP site. Ser190 carries the phosphoserine modification. A Phosphoserine; by CDK1 modification is found at Ser204. 2 S-geranylgeranyl cysteine lipidation sites follow: Cys216 and Cys218. Residue Cys218 is modified to Cysteine methyl ester.

This sequence belongs to the small GTPase superfamily. Rab family. In terms of assembly, interacts with SGSM1, SGSM2 and SGSM3. Interacts with RAB11FIP1, RABEP1, ZFYVE20 and RUFY1. Interacts (membrane-bound form) with NDRG1; the interaction involves NDRG1 in vesicular recycling of E-cadherin. Interacts (in GTP-bound form) with GRIPAP1 (via N-terminus). Interacts with RABEP1 and RBSN. Does not interact with HPS4. Does not interact with HPS4. Interacts with RABEP2; this interaction may mediate VEGFR2 cell surface expression. Mg(2+) is required as a cofactor. In terms of processing, serotonylation of Gln-72 by TGM2 during activation and aggregation of platelets leads to constitutive activation of GTPase activity. Phosphorylated by CDK1 kinase during mitosis. As to expression, expressed in the central nervous system, including cortex, cerebellum, midbrain and spinal cord, and in the kidney, lung, liver and spleen.

It localises to the membrane. Its subcellular location is the cytoplasm. The protein localises to the early endosome membrane. The protein resides in the recycling endosome membrane. The catalysed reaction is GTP + H2O = GDP + phosphate + H(+). Regulated by guanine nucleotide exchange factors (GEFs) which promote the exchange of bound GDP for free GTP. Regulated by GTPase activating proteins (GAPs) which increase the GTP hydrolysis activity. Inhibited by GDP dissociation inhibitors (GDIs). Its function is as follows. The small GTPases Rab are key regulators of intracellular membrane trafficking, from the formation of transport vesicles to their fusion with membranes. Rabs cycle between an inactive GDP-bound form and an active GTP-bound form that is able to recruit to membranes different sets of downstream effectors directly responsible for vesicle formation, movement, tethering and fusion. RAB4A is involved in protein transport. Also plays a role in vesicular traffic. Mediates VEGFR2 endosomal trafficking to enhance VEGFR2 signaling. Acts as a regulator of platelet alpha-granule release during activation and aggregation of platelets. The chain is Ras-related protein Rab-4A from Mus musculus (Mouse).